Consider the following 876-residue polypeptide: Alanine--tRNA ligase (876 aa).

N6-acetyllysine is present on K74. 4 residues coordinate Zn(2+): H564, H568, C666, and H670.

The protein belongs to the class-II aminoacyl-tRNA synthetase family. Homotetramer. The cofactor is Zn(2+).

Its subcellular location is the cytoplasm. The enzyme catalyses tRNA(Ala) + L-alanine + ATP = L-alanyl-tRNA(Ala) + AMP + diphosphate. Catalyzes the attachment of alanine to tRNA(Ala) in a two-step reaction: alanine is first activated by ATP to form Ala-AMP and then transferred to the acceptor end of tRNA(Ala). Also edits incorrectly charged Ser-tRNA(Ala) and Gly-tRNA(Ala) via its editing domain. The protein is Alanine--tRNA ligase of Escherichia coli O1:K1 / APEC.